The chain runs to 271 residues: Serine O-acetyltransferase (271 aa).

The Acyl-thioester intermediate role is filled by Cys112. Residue His204 is the Proton acceptor of the active site. Glu206 is an active-site residue.

This sequence belongs to the MetA family.

It carries out the reaction L-serine + acetyl-CoA = O-acetyl-L-serine + CoA. It participates in amino-acid biosynthesis; L-cysteine biosynthesis; L-cysteine from L-serine: step 1/2. In terms of biological role, catalyzes the formation of O-acetylserine (OAS) from L-serine and acetyl-CoA. To a lesser extent, is also able to use succinyl-CoA and propionyl-CoA as acyl donors, but not butyryl-CoA. Does not acylate D-serine and L-homoserine. This chain is Serine O-acetyltransferase, found in Lacticaseibacillus casei (Lactobacillus casei).